The following is a 295-amino-acid chain: Formamidopyrimidine-DNA glycosylase (295 aa).

The Schiff-base intermediate with DNA role is filled by Pro2. Glu3 serves as the catalytic Proton donor. The active-site Proton donor; for beta-elimination activity is the Lys61. Residues His95, Arg117, and Arg159 each contribute to the DNA site. The segment at 245 to 279 (HAYGREGEACERCGTPIRRVAFMNRSSYFCPVCQP) adopts an FPG-type zinc-finger fold. Residue Arg269 is the Proton donor; for delta-elimination activity of the active site.

The protein belongs to the FPG family. Monomer. The cofactor is Zn(2+).

It carries out the reaction Hydrolysis of DNA containing ring-opened 7-methylguanine residues, releasing 2,6-diamino-4-hydroxy-5-(N-methyl)formamidopyrimidine.. It catalyses the reaction 2'-deoxyribonucleotide-(2'-deoxyribose 5'-phosphate)-2'-deoxyribonucleotide-DNA = a 3'-end 2'-deoxyribonucleotide-(2,3-dehydro-2,3-deoxyribose 5'-phosphate)-DNA + a 5'-end 5'-phospho-2'-deoxyribonucleoside-DNA + H(+). Involved in base excision repair of DNA damaged by oxidation or by mutagenic agents. Acts as a DNA glycosylase that recognizes and removes damaged bases. Has a preference for oxidized purines, such as 7,8-dihydro-8-oxoguanine (8-oxoG). Has AP (apurinic/apyrimidinic) lyase activity and introduces nicks in the DNA strand. Cleaves the DNA backbone by beta-delta elimination to generate a single-strand break at the site of the removed base with both 3'- and 5'-phosphates. In Nocardioides sp. (strain ATCC BAA-499 / JS614), this protein is Formamidopyrimidine-DNA glycosylase.